The primary structure comprises 78 residues: Large ribosomal subunit protein bL28 (78 aa).

Residues 1–20 (MSRVCQVTGKGPVTGNNISH) form a disordered region.

The protein belongs to the bacterial ribosomal protein bL28 family.

The sequence is that of Large ribosomal subunit protein bL28 from Pseudomonas putida (strain ATCC 700007 / DSM 6899 / JCM 31910 / BCRC 17059 / LMG 24140 / F1).